The primary structure comprises 146 residues: Ferredoxin-type protein FwdE (146 aa).

4Fe-4S ferredoxin-type domains follow at residues 90–115 (IKLF…TLDN) and 116–145 (FTVG…FIKE). 4 residues coordinate [4Fe-4S] cluster: Cys-125, Cys-128, Cys-131, and Cys-135.

It depends on [4Fe-4S] cluster as a cofactor.

The sequence is that of Ferredoxin-type protein FwdE (fwdE) from Methanocaldococcus jannaschii (strain ATCC 43067 / DSM 2661 / JAL-1 / JCM 10045 / NBRC 100440) (Methanococcus jannaschii).